The following is a 125-amino-acid chain: uncharacterized protein (125 aa).

Belongs to the anhydro-N-acetylmuramic acid kinase family.

This is an uncharacterized protein from Yersinia enterocolitica.